A 121-amino-acid chain; its full sequence is Large ribosomal subunit protein eL8 (121 aa).

It belongs to the eukaryotic ribosomal protein eL8 family. Part of the 50S ribosomal subunit. Probably part of the RNase P complex.

It localises to the cytoplasm. Multifunctional RNA-binding protein that recognizes the K-turn motif in ribosomal RNA, the RNA component of RNase P, box H/ACA, box C/D and box C'/D' sRNAs. The chain is Large ribosomal subunit protein eL8 from Thermoplasma volcanium (strain ATCC 51530 / DSM 4299 / JCM 9571 / NBRC 15438 / GSS1).